The chain runs to 72 residues: Movement protein TGBp3 (72 aa).

Over 1–2 the chain is Lumenal; sequence MS. The helical transmembrane segment at 3-23 threads the bilayer; sequence LSFSLIVFAVGVAVSIGVLTL. At 24 to 72 the chain is on the cytoplasmic side; it reads TTQQSSSYCLILVDGAKAVVEGCHLRQDIPAILSELKPASSPFNPLFCS.

The protein belongs to the Tymovirales TGBp3 protein family.

It localises to the host endoplasmic reticulum membrane. Functionally, plays a role in viral cell-to-cell propagation, by facilitating genome transport to neighboring plant cells through plasmosdesmata. May induce the formation of granular vesicles derived from the Endoplasmic reticulum, which align on actin filaments. This chain is Movement protein TGBp3 (ORF4), found in Lolium latent virus (isolate Lolium/USA/US1/-) (LoLV).